The following is a 564-amino-acid chain: Kelch repeat and BTB domain-containing protein 1 (564 aa).

Residues 21–88 (CDINIVINDE…IYGIPLSLTN (68 aa)) form the BTB domain. The BACK domain maps to 123–219 (CIDFYIYADK…SLLSPQVIKS (97 aa)). Kelch repeat units follow at residues 252-297 (IELI…VLDN), 298-346 (IIYM…ADDE), 347-395 (YIYC…MLNG), 397-441 (IYVI…VHDG), 442-492 (KIYI…SAHN), and 494-539 (LYVG…CEPI).

As to quaternary structure, interacts (via BTB domain) with host CUL3.

It localises to the host cytoplasm. Functionally, probable substrate-specific adapter of CUL3-containing E3 ubiquitin-protein ligases which mediate the ubiquitination and subsequent proteasomal degradation of host target proteins. This chain is Kelch repeat and BTB domain-containing protein 1 (KBTB1), found in Cowpox virus (strain GRI-90 / Grishak) (CPV).